The sequence spans 194 residues: Holliday junction branch migration complex subunit RuvA (194 aa).

The domain I stretch occupies residues 1–64 (MIGRLRGILA…EDSVSLYGFL (64 aa)). The tract at residues 65-140 (REGERRLFRD…RAADFSSGAP (76 aa)) is domain II. The interval 140-144 (PITGQ) is flexible linker. Residues 145–194 (LGPDAISEATVALQQLGYKPAEAARMARDAGAEGGEVATVIRKALQAALR) form a domain III region.

Belongs to the RuvA family. As to quaternary structure, homotetramer. Forms an RuvA(8)-RuvB(12)-Holliday junction (HJ) complex. HJ DNA is sandwiched between 2 RuvA tetramers; dsDNA enters through RuvA and exits via RuvB. An RuvB hexamer assembles on each DNA strand where it exits the tetramer. Each RuvB hexamer is contacted by two RuvA subunits (via domain III) on 2 adjacent RuvB subunits; this complex drives branch migration. In the full resolvosome a probable DNA-RuvA(4)-RuvB(12)-RuvC(2) complex forms which resolves the HJ.

It localises to the cytoplasm. Its function is as follows. The RuvA-RuvB-RuvC complex processes Holliday junction (HJ) DNA during genetic recombination and DNA repair, while the RuvA-RuvB complex plays an important role in the rescue of blocked DNA replication forks via replication fork reversal (RFR). RuvA specifically binds to HJ cruciform DNA, conferring on it an open structure. The RuvB hexamer acts as an ATP-dependent pump, pulling dsDNA into and through the RuvAB complex. HJ branch migration allows RuvC to scan DNA until it finds its consensus sequence, where it cleaves and resolves the cruciform DNA. The sequence is that of Holliday junction branch migration complex subunit RuvA from Xanthomonas oryzae pv. oryzae (strain MAFF 311018).